The following is a 482-amino-acid chain: MTTYDTQPSTLIRNAAAIMTGGRGTADDPSRVPGPDIRIVGDTIDAIGALAPRPGETIVDATDCVIYPAWVNTHHHLFQSLLKGEPAGLDATLTPWLAATPYRFRALFDERRFRLAARIGLIELARSGCATVADHNYVYYPGMPFDSSAILFEEAEKLGLRFVLLRGGATQTRQLEADLPTALRPETLDAYVADIERLAARYHDASPRAMRRVVMAPTTVLYSISPREMRETAAVARRLGLRMHSHLSETVGYQDSAYSMYGKSPVAFCGEHDWLGSDVWYAHLVKVDADEIALLAQTGTGVAHCPQSNGRLGSGICPVREMADAGVPVSIGVDGAASNEAADMISEVHMTWLAQRARLGMLAQPAYRGGSFEGGAGAASIAEVIHWGTAGGARVMGLDEVGKVAVGYAADIAVYRLDDPRYFGLHDPAIGPVASGGRPSVMALFSAGKRVVVDDLIEGVDIKELGGEARRVVRELLREVVV.

His-74 and His-76 together coordinate Zn(2+). Gln-79 provides a ligand contact to substrate. His-246 is a Zn(2+) binding site. 2 residues coordinate substrate: Glu-249 and His-283. Positions 283 and 334 each coordinate Zn(2+).

This sequence belongs to the metallo-dependent hydrolases superfamily. ATZ/TRZ family. Zn(2+) is required as a cofactor.

It catalyses the reaction a 2-amino-4-hydroxypteridine + H2O + H(+) = a 2,4-dihydroxypteridine + NH4(+). The sequence is that of Isoxanthopterin deaminase from Unknown prokaryotic organism.